The chain runs to 102 residues: Large ribosomal subunit protein uL23 (102 aa).

This sequence belongs to the universal ribosomal protein uL23 family. Part of the 50S ribosomal subunit. Contacts protein L29, and trigger factor when it is bound to the ribosome.

Its function is as follows. One of the early assembly proteins it binds 23S rRNA. One of the proteins that surrounds the polypeptide exit tunnel on the outside of the ribosome. Forms the main docking site for trigger factor binding to the ribosome. In Cutibacterium acnes (strain DSM 16379 / KPA171202) (Propionibacterium acnes), this protein is Large ribosomal subunit protein uL23.